A 133-amino-acid chain; its full sequence is Putative redox protein FMP46, mitochondrial (133 aa).

The transit peptide at 1–21 (MSFWKTLQRQPRTISLFTNDI) directs the protein to the mitochondrion. C97 is an active-site residue.

This sequence belongs to the FMP46 family.

It localises to the mitochondrion. Functionally, putative mitochondrial redox protein which could be involved in the reduction of small toxic molecules. The polypeptide is Putative redox protein FMP46, mitochondrial (FMP46) (Saccharomyces cerevisiae (strain ATCC 204508 / S288c) (Baker's yeast)).